The sequence spans 233 residues: UPF0502 protein Sden_2282 (233 aa).

Polar residues predominate over residues 178-198 (TQHQRPPQTPHLSSRTNVDNS). Positions 178–204 (TQHQRPPQTPHLSSRTNVDNSYESDER) are disordered.

Belongs to the UPF0502 family.

This Shewanella denitrificans (strain OS217 / ATCC BAA-1090 / DSM 15013) protein is UPF0502 protein Sden_2282.